Reading from the N-terminus, the 269-residue chain is Putative hydro-lyase M446_2125 (269 aa).

The protein belongs to the D-glutamate cyclase family.

The sequence is that of Putative hydro-lyase M446_2125 from Methylobacterium sp. (strain 4-46).